Consider the following 197-residue polypeptide: GTP cyclohydrolase-2 (197 aa).

Residue 50 to 54 (RIHSE) participates in GTP binding. Zn(2+) is bound by residues Cys55, Cys66, and Cys68. GTP contacts are provided by residues Gln71, 93–95 (EGR), and Thr115. The Proton acceptor role is filled by Asp127. The active-site Nucleophile is the Arg129. GTP is bound by residues Thr150 and Lys155.

The protein belongs to the GTP cyclohydrolase II family. Zn(2+) is required as a cofactor.

The catalysed reaction is GTP + 4 H2O = 2,5-diamino-6-hydroxy-4-(5-phosphoribosylamino)-pyrimidine + formate + 2 phosphate + 3 H(+). It participates in cofactor biosynthesis; riboflavin biosynthesis; 5-amino-6-(D-ribitylamino)uracil from GTP: step 1/4. In terms of biological role, catalyzes the conversion of GTP to 2,5-diamino-6-ribosylamino-4(3H)-pyrimidinone 5'-phosphate (DARP), formate and pyrophosphate. This chain is GTP cyclohydrolase-2, found in Neisseria meningitidis serogroup A / serotype 4A (strain DSM 15465 / Z2491).